The chain runs to 206 residues: Pyridoxine/pyridoxamine 5'-phosphate oxidase (206 aa).

FMN-binding positions include 55 to 60 (RVVLLK), 70 to 71 (YT), R76, K77, and Q99. K60 is a binding site for substrate. Y117, R121, and S125 together coordinate substrate. FMN contacts are provided by residues 134–135 (QS) and W179. 185-187 (RLH) lines the substrate pocket. R189 contacts FMN.

The protein belongs to the pyridoxamine 5'-phosphate oxidase family. In terms of assembly, homodimer. Requires FMN as cofactor.

The catalysed reaction is pyridoxamine 5'-phosphate + O2 + H2O = pyridoxal 5'-phosphate + H2O2 + NH4(+). The enzyme catalyses pyridoxine 5'-phosphate + O2 = pyridoxal 5'-phosphate + H2O2. It functions in the pathway cofactor metabolism; pyridoxal 5'-phosphate salvage; pyridoxal 5'-phosphate from pyridoxamine 5'-phosphate: step 1/1. The protein operates within cofactor metabolism; pyridoxal 5'-phosphate salvage; pyridoxal 5'-phosphate from pyridoxine 5'-phosphate: step 1/1. Catalyzes the oxidation of either pyridoxine 5'-phosphate (PNP) or pyridoxamine 5'-phosphate (PMP) into pyridoxal 5'-phosphate (PLP). The protein is Pyridoxine/pyridoxamine 5'-phosphate oxidase of Myxococcus xanthus (strain DK1622).